Here is a 1909-residue protein sequence, read N- to C-terminus: Plexin-B3 (1909 aa).

A signal peptide spans 1–44 (MCHAAQETPLLHHFMAPVMARWPPFGLCLLLLLLSPPPLPLTGA). The 427-residue stretch at 45-471 (HRFSAPNTTL…TAHQVDRIPV (427 aa)) folds into the Sema domain. The Extracellular portion of the chain corresponds to 45–1255 (HRFSAPNTTL…PLSAFPVEAQ (1211 aa)). N-linked (GlcNAc...) asparagine glycosylation is present at Asn-51. 2 disulfides stabilise this stretch: Cys-98/Cys-107 and Cys-132/Cys-140. Residue Asn-231 is glycosylated (N-linked (GlcNAc...) asparagine). Disulfide bonds link Cys-267–Cys-370, Cys-283–Cys-315, Cys-333–Cys-357, Cys-474–Cys-491, Cys-480–Cys-525, Cys-483–Cys-500, Cys-494–Cys-506, and Cys-562–Cys-580. In terms of domain architecture, PSI 1 spans 473–526 (ACPQFPDCASCLQAQDPLCGWCVLQGRCTRKGQCGRAGQLNQWLWSYEEDSHCL). N-linked (GlcNAc...) asparagine glycosylation occurs at Asn-615. 2 consecutive PSI domains span residues 620 to 682 (DCSA…GACP) and 787 to 833 (DCAM…LLCP). 5 N-linked (GlcNAc...) asparagine glycosylation sites follow: Asn-802, Asn-900, Asn-957, Asn-1101, and Asn-1218. IPT/TIG domains lie at 835–925 (PSID…FTYQ), 927–1012 (PVLL…FRYT), 1015–1145 (PQLV…FLYQ), and 1159–1244 (ARPY…YEAE). Residues 1256–1276 (AGVGMGAAVLIAAVLLLTLMY) traverse the membrane as a helical segment. Topologically, residues 1277 to 1909 (RHKSKQALRD…ALVENKVTDL (633 aa)) are cytoplasmic.

The protein belongs to the plexin family. As to quaternary structure, interacts (via cytoplasmic domain) with RAC1 and ARHGDIA. Binds MET and MST1R. Interacts (via cytoplasmic domain) with FSCN1. Interacts with RIT2/RIN. May form homodimers (via Sema domain). As to expression, expression detected in Purkinje and granular cells in cerebellum, and in brain neocortex but not in corpus callosum. Expressed in glioma cells and embryonic kidney cells (at protein level). Expressed in brain, liver, pancreas and placenta, with weak expression detected also in lung and kidney. Expressed in several glioma cell lines.

It localises to the cell membrane. Functionally, receptor for SEMA5A that plays a role in axon guidance, invasive growth and cell migration. Stimulates neurite outgrowth and mediates Ca(2+)/Mg(2+)-dependent cell aggregation. In glioma cells, SEMA5A stimulation of PLXNB3 results in the disassembly of F-actin stress fibers, disruption of focal adhesions and cellular collapse as well as inhibition of cell migration and invasion through ARHGDIA-mediated inactivation of RAC1. This chain is Plexin-B3 (PLXNB3), found in Homo sapiens (Human).